Consider the following 124-residue polypeptide: Small ribosomal subunit protein uS12 (124 aa).

Residues 1 to 25 form a disordered region; that stretch reads MPTFNQLVRNGRKPPRWKTSSPALE. A 3-methylthioaspartic acid modification is found at Asp89. The interval 104–124 is disordered; it reads TAGVANRKQSRSKYGAKRPKS. Residues 111 to 124 show a composition bias toward basic residues; that stretch reads KQSRSKYGAKRPKS.

This sequence belongs to the universal ribosomal protein uS12 family. Part of the 30S ribosomal subunit. Contacts proteins S8 and S17. May interact with IF1 in the 30S initiation complex.

In terms of biological role, with S4 and S5 plays an important role in translational accuracy. Functionally, interacts with and stabilizes bases of the 16S rRNA that are involved in tRNA selection in the A site and with the mRNA backbone. Located at the interface of the 30S and 50S subunits, it traverses the body of the 30S subunit contacting proteins on the other side and probably holding the rRNA structure together. The combined cluster of proteins S8, S12 and S17 appears to hold together the shoulder and platform of the 30S subunit. This is Small ribosomal subunit protein uS12 from Solibacter usitatus (strain Ellin6076).